We begin with the raw amino-acid sequence, 437 residues long: Proton/glutamate-aspartate symporter (437 aa).

The Cytoplasmic portion of the chain corresponds to 1–5 (MKNIK). A helical membrane pass occupies residues 6 to 26 (FSLAWQILFAMVLGILLGSYL). Residues 27 to 50 (HYHSDSRDWLVVNLLSPAGDIFIH) are Periplasmic-facing. The helical transmembrane segment at 51–71 (LIKMIVVPIVISTLVVGIAGV) threads the bilayer. Residues 72 to 84 (GDAKQLGRIGAKT) are Cytoplasmic-facing. The chain crosses the membrane as a helical span at residues 85 to 105 (IIYFEVITTVAIILGITLANV). At 106–159 (FQPGAGVDMSQLATVDISKYQSTTEAVQSSSHGIMGTILSLVPTNIVASMAKGE) the chain is on the periplasmic side. Residues 160–180 (MLPIIFFSVLFGLGLSSLPAT) form a helical membrane-spanning segment. Topologically, residues 181 to 210 (HREPLVTVFRSISETMFKVTHMVMRYAPVG) are cytoplasmic. A helical membrane pass occupies residues 211-231 (VFALIAVTVANFGFSSLWPLA). Residue K232 is a topological domain, periplasmic. Residues 233–253 (LVLLVHFAILFFALVVLGIVA) form a helical membrane-spanning segment. The Cytoplasmic segment spans residues 254–292 (RLCGLSVWILIRILKDELILAYSTASSESVLPRIIEKME). The helical transmembrane segment at 293–313 (AYGAPVSITSFVVPTGYSFNL) threads the bilayer. Over 314–324 (DGSTLYQSIAA) the chain is Periplasmic. Residues 325-345 (IFIAQLYGIDLSIWQEIILVL) form a helical membrane-spanning segment. Topologically, residues 346–361 (TLMVTSKGIAGVPGVS) are cytoplasmic. The chain crosses the membrane as a helical span at residues 362–382 (FVVLLATLGSVGIPLEGLAFI). Residues 383–387 (AGVDR) are Periplasmic-facing. Residues 388-408 (ILDMARTALNVVGNALAVLVI) traverse the membrane as a helical segment. Over 409–437 (AKWEHKFDRKKALAYEREVLGKFDKTADQ) the chain is Cytoplasmic.

This sequence belongs to the dicarboxylate/amino acid:cation symporter (DAACS) (TC 2.A.23) family. GltP subfamily.

Its subcellular location is the cell inner membrane. Glutamate uptake is inhibited by L-cysteate and beta-hydroxyaspartate. Inhibited by the uncoupler carbonylcyanide m-chlorophenylhydrazone (CCCP). Its function is as follows. Catalyzes the proton-dependent, binding-protein-independent transport of glutamate and aspartate. The chain is Proton/glutamate-aspartate symporter from Escherichia coli (strain K12).